The following is a 133-amino-acid chain: Core atranone cluster (CAC) protein 11 (133 aa).

The protein operates within mycotoxin biosynthesis. Part of the core atranone cluster (CAC) which products are predicted to catalyze most or all steps of mycotoxin atranone synthesis, starting from geranylgeranyl pyrophosphate (GGPP). The initial cyclization of GGPP to dolabellane is probably performed by the terpene cyclase ATR13. The Baeyer-Villiger oxidation near the end of the atranone synthesis, which converts atranones D and E to atranones F and G is predicted to be catalyzed by the monooxygenase ATR8. Of the CAC's other predicted gene products, the reducing PKS ATR6 might synthesize a polyketide chain. This polyketide is probably transferred onto the atranone backbone by the polyketide transferase ATR5. Other predicted CAC products include 4 oxygenases (ATR2, ATR3, ATR4, and ATR14), 3 short-chain reductases (ATR7, ATR9, and ATR10), and a methyltransferase (ATR12). These may all be involved in the various steps of atranone biosynthesis, although their specific roles must await experimental determination. The sequence is that of Core atranone cluster (CAC) protein 11 from Stachybotrys chlorohalonatus (strain IBT 40285).